Here is a 42-residue protein sequence, read N- to C-terminus: Packaging protein P20 (42 aa).

Residues 11 to 31 (INWLIVILMLTIAGMAATLVC) traverse the membrane as a helical segment.

In terms of assembly, heterodimer of P20 and P22; further multimerizes as hexamers of heterodimers. Part of the dodecameric portal complex that is composed of the packaging efficiency factor P6, the DNA packaging ATPase P9, and the internal heterododecamer P20/P22 which spans the virion inner membrane.

It is found in the virion membrane. Its function is as follows. Together with P22, forms the internal part of the portal complex embeded in the virion internal membrane and which plays critical roles in genome packaging and genome ejection. Both proteins multimerize as a single ring-shaped heterdodecamer arranged around a central channel and interact with the P6/P9 external part of the portal. The polypeptide is Packaging protein P20 (XX) (Acinetobacter calcoaceticus (Arthrobacter siderocapsulatus)).